The following is an 887-amino-acid chain: Translation initiation factor IF-2 (887 aa).

Disordered regions lie at residues 31–87 (KLAQ…PRRI), 94–113 (SFVS…DSDA), and 129–285 (VETE…KWRK). Basic and acidic residues predominate over residues 42–59 (SSSEKPSTKVPEKIAKEK). Composition is skewed to basic and acidic residues over residues 150–171 (VVAK…KEPP) and 199–212 (PKKE…EKTK). Low complexity predominate over residues 213-223 (TTQTKPQQSSD). The span at 241–273 (YRRDVSKKSGSDFRDRAKKDDNPKAFTGRDRYG) shows a compositional bias: basic and acidic residues. The region spanning 393 to 562 (TRPPIVAFMG…ALQAEVLELK (170 aa)) is the tr-type G domain. The tract at residues 402–409 (GHVDHGKT) is G1. GTP is bound at residue 402–409 (GHVDHGKT). Residues 427–431 (AITQH) are G2. Residues 448–451 (DTPG) form a G3 region. GTP is bound by residues 448-452 (DTPGH) and 502-505 (NKCD). Residues 502-505 (NKCD) are G4. Residues 538–540 (SAK) are G5.

This sequence belongs to the TRAFAC class translation factor GTPase superfamily. Classic translation factor GTPase family. IF-2 subfamily.

It is found in the cytoplasm. In terms of biological role, one of the essential components for the initiation of protein synthesis. Protects formylmethionyl-tRNA from spontaneous hydrolysis and promotes its binding to the 30S ribosomal subunits. Also involved in the hydrolysis of GTP during the formation of the 70S ribosomal complex. This chain is Translation initiation factor IF-2, found in Chlamydia caviae (strain ATCC VR-813 / DSM 19441 / 03DC25 / GPIC) (Chlamydophila caviae).